An 89-amino-acid polypeptide reads, in one-letter code: Small ribosomal subunit protein uS17 (89 aa).

This sequence belongs to the universal ribosomal protein uS17 family. In terms of assembly, part of the 30S ribosomal subunit.

Its function is as follows. One of the primary rRNA binding proteins, it binds specifically to the 5'-end of 16S ribosomal RNA. The chain is Small ribosomal subunit protein uS17 from Coxiella burnetii (strain Dugway 5J108-111).